The primary structure comprises 156 residues: ATP synthase subunit b (156 aa).

A helical membrane pass occupies residues 11-31 (LIAFALFVWFCMKFVWPPIIN).

It belongs to the ATPase B chain family. In terms of assembly, F-type ATPases have 2 components, F(1) - the catalytic core - and F(0) - the membrane proton channel. F(1) has five subunits: alpha(3), beta(3), gamma(1), delta(1), epsilon(1). F(0) has three main subunits: a(1), b(2) and c(10-14). The alpha and beta chains form an alternating ring which encloses part of the gamma chain. F(1) is attached to F(0) by a central stalk formed by the gamma and epsilon chains, while a peripheral stalk is formed by the delta and b chains.

It is found in the cell inner membrane. In terms of biological role, f(1)F(0) ATP synthase produces ATP from ADP in the presence of a proton or sodium gradient. F-type ATPases consist of two structural domains, F(1) containing the extramembraneous catalytic core and F(0) containing the membrane proton channel, linked together by a central stalk and a peripheral stalk. During catalysis, ATP synthesis in the catalytic domain of F(1) is coupled via a rotary mechanism of the central stalk subunits to proton translocation. Its function is as follows. Component of the F(0) channel, it forms part of the peripheral stalk, linking F(1) to F(0). This Haemophilus influenzae (strain PittEE) protein is ATP synthase subunit b.